Consider the following 201-residue polypeptide: FMN-dependent NADH:quinone oxidoreductase (201 aa).

Residues 92 to 95 (MWNL) and 136 to 139 (STGG) each bind FMN.

The protein belongs to the azoreductase type 1 family. Homodimer. The cofactor is FMN.

It catalyses the reaction 2 a quinone + NADH + H(+) = 2 a 1,4-benzosemiquinone + NAD(+). It carries out the reaction N,N-dimethyl-1,4-phenylenediamine + anthranilate + 2 NAD(+) = 2-(4-dimethylaminophenyl)diazenylbenzoate + 2 NADH + 2 H(+). Quinone reductase that provides resistance to thiol-specific stress caused by electrophilic quinones. Functionally, also exhibits azoreductase activity. Catalyzes the reductive cleavage of the azo bond in aromatic azo compounds to the corresponding amines. This is FMN-dependent NADH:quinone oxidoreductase from Coprothermobacter proteolyticus (strain ATCC 35245 / DSM 5265 / OCM 4 / BT).